Reading from the N-terminus, the 437-residue chain is O-methyltransferase 10 (437 aa).

Positions 259, 282, 315, and 316 each coordinate S-adenosyl-L-methionine. The active-site Proton acceptor is the His-335.

Belongs to the class I-like SAM-binding methyltransferase superfamily. Cation-independent O-methyltransferase family. COMT subfamily.

The catalysed reaction is (3,5-dichloro-2,4,6-trihydroxyphenyl)hexan-1-one + S-adenosyl-L-methionine = 1-(3,5-dichloro-2,6-dihydroxy-4-methoxyphenyl)hexan-1-one + S-adenosyl-L-homocysteine + H(+). The polypeptide is O-methyltransferase 10 (omt10) (Dictyostelium discoideum (Social amoeba)).